The sequence spans 37 residues: Potassium channel toxin alpha-KTx 4.3 (37 aa).

3 cysteine pairs are disulfide-bonded: C7-C28, C13-C33, and C17-C35. Residues 26-33 are interaction with Ca(2+)-activated K(+) channels; sequence GKCMNGKC.

In terms of tissue distribution, expressed by the venom gland.

It localises to the secreted. Its function is as follows. Blocks reversibly Shaker B potassium-channels. The sequence is that of Potassium channel toxin alpha-KTx 4.3 from Tityus discrepans (Venezuelan scorpion).